The chain runs to 189 residues: GMP synthase [glutamine-hydrolyzing] subunit A (189 aa).

The region spanning 5–189 is the Glutamine amidotransferase type-1 domain; that stretch reads KIIVINNYGQ…MNFFKVCEDY (185 aa). Cysteine 79 serves as the catalytic Nucleophile. Catalysis depends on residues histidine 166 and glutamate 168.

In terms of assembly, heterodimer composed of a glutamine amidotransferase subunit (A) and a GMP-binding subunit (B).

It carries out the reaction XMP + L-glutamine + ATP + H2O = GMP + L-glutamate + AMP + diphosphate + 2 H(+). It functions in the pathway purine metabolism; GMP biosynthesis; GMP from XMP (L-Gln route): step 1/1. Functionally, catalyzes the synthesis of GMP from XMP. The polypeptide is GMP synthase [glutamine-hydrolyzing] subunit A (Methanococcoides burtonii (strain DSM 6242 / NBRC 107633 / OCM 468 / ACE-M)).